Here is a 915-residue protein sequence, read N- to C-terminus: Translation initiation factor IF-2 (915 aa).

Residues 83–94 show a composition bias toward basic and acidic residues; sequence QSRRAVEKEQIL. Disordered regions lie at residues 83-177, 216-280, and 293-328; these read QSRR…PEPP, EADR…KPAV, and ISGM…LLRE. 2 stretches are compositionally biased toward low complexity: residues 111–129 and 137–164; these read VRAA…EAPS and APAT…LSAP. Pro residues predominate over residues 165 to 177; sequence LPEPVPEPVPEPP. Residues 293-305 are compositionally biased toward polar residues; the sequence is ISGMDDSSGTGSR. The span at 314–328 shows a compositional bias: basic and acidic residues; sequence MEREREQEEADLLRE. Residues 412-582 enclose the tr-type G domain; it reads TRPPVVTIMG…LTEAEMRELK (171 aa). Residues 421-428 are G1; that stretch reads GHVDHGKT. Position 421-428 (421-428) interacts with GTP; the sequence is GHVDHGKT. The segment at 446-450 is G2; the sequence is GITQH. A G3 region spans residues 468 to 471; sequence DTPG. Residues 468–472 and 522–525 each bind GTP; these read DTPGH and NKMD. The tract at residues 522–525 is G4; that stretch reads NKMD. The G5 stretch occupies residues 558–560; sequence SAK.

This sequence belongs to the TRAFAC class translation factor GTPase superfamily. Classic translation factor GTPase family. IF-2 subfamily.

It is found in the cytoplasm. One of the essential components for the initiation of protein synthesis. Protects formylmethionyl-tRNA from spontaneous hydrolysis and promotes its binding to the 30S ribosomal subunits. Also involved in the hydrolysis of GTP during the formation of the 70S ribosomal complex. The protein is Translation initiation factor IF-2 of Chlorobium luteolum (strain DSM 273 / BCRC 81028 / 2530) (Pelodictyon luteolum).